A 651-amino-acid polypeptide reads, in one-letter code: Ion-translocating oxidoreductase complex subunit C (651 aa).

4Fe-4S ferredoxin-type domains are found at residues 368–398 (EYAEPEAEQACIRCSSCSDACPVNLMPQQLY) and 408–437 (KSEEYALKDCIECGICAYVCPSHIPLIQYF). The [4Fe-4S] cluster site is built by Cys378, Cys381, Cys384, Cys388, Cys417, Cys420, Cys423, and Cys427. 2 stretches are compositionally biased toward basic and acidic residues: residues 465 to 477 (QARMEREEQERKA) and 485 to 513 (ARREELAQTKGEDPVKAALERLKAKKANE). Disordered regions lie at residues 465–565 (QARM…QPTD) and 583–624 (LAQA…DPKK). Composition is skewed to polar residues over residues 554 to 564 (VENQEQQTQPT) and 587 to 600 (NSTSEAISNSQTAE). Residues 602–614 (EVEKTKSAVEKTQ) are compositionally biased toward basic and acidic residues.

The protein belongs to the 4Fe4S bacterial-type ferredoxin family. RnfC subfamily. As to quaternary structure, the complex is composed of six subunits: RnfA, RnfB, RnfC, RnfD, RnfE and RnfG. Requires [4Fe-4S] cluster as cofactor.

It localises to the cell inner membrane. In terms of biological role, part of a membrane-bound complex that couples electron transfer with translocation of ions across the membrane. This is Ion-translocating oxidoreductase complex subunit C from Haemophilus influenzae (strain PittEE).